The following is a 255-amino-acid chain: Flap endonuclease Xni (255 aa).

Asp105 is a binding site for Mg(2+). Positions 162–254 (EHKQFIDYLA…LKQFRLPKAN (93 aa)) constitute a 5'-3' exonuclease domain. Residues Leu172, Ala173, Pro181, Val183, and Ile186 each contribute to the K(+) site. Residues 185-190 (GIGPKS) are interaction with DNA.

It belongs to the Xni family. The cofactor is Mg(2+). Requires K(+) as cofactor.

Its function is as follows. Has flap endonuclease activity. During DNA replication, flap endonucleases cleave the 5'-overhanging flap structure that is generated by displacement synthesis when DNA polymerase encounters the 5'-end of a downstream Okazaki fragment. This is Flap endonuclease Xni from Shewanella piezotolerans (strain WP3 / JCM 13877).